A 50-amino-acid chain; its full sequence is Large ribosomal subunit protein bL33B (50 aa).

The protein belongs to the bacterial ribosomal protein bL33 family.

The protein is Large ribosomal subunit protein bL33B (rpmG2) of Enterococcus faecalis (strain ATCC 700802 / V583).